Consider the following 287-residue polypeptide: Complement C1q-like protein 2 (287 aa).

The signal sequence occupies residues 1–21 (MALGLLIAVPLLLQAAPPGAA). The segment at 65–144 (LSANPPPPFI…GTGGGGDTEG (80 aa)) is disordered. In terms of domain architecture, Collagen-like spans 76-118 (GPKGDPGRPGKPGPRGPPGEPGPPGPRGPPGEKGDSGRPGLPG). Pro residues predominate over residues 84-104 (PGKPGPRGPPGEPGPPGPRGP). The span at 127-141 (GGVGVVSGGTGGGGD) shows a compositional bias: gly residues. Residues 154–287 (FSGPKIAFYV…TFSGFLLYPD (134 aa)) form the C1q domain.

Forms homotrimers which can further assemble to form higher-order oligomeric complexes. Interacts with ADGRB3. May interact with ERFE. Forms heterooligomers with C1QL3 and C1QL4, when proteins are coexpressed; this interaction does not occur after secretion. Glycosylated, but not with N-linked glycans. In terms of tissue distribution, highest expression in eye, followed by placenta and brain, intermediate expression in adipose tissue and lowest expression in lymph node and testis.

It localises to the secreted. Functionally, may regulate the number of excitatory synapses that are formed on hippocampus neurons. Has no effect on inhibitory synapses. The polypeptide is Complement C1q-like protein 2 (C1ql2) (Mus musculus (Mouse)).